We begin with the raw amino-acid sequence, 298 residues long: MTATIIDGKIIATELRARVAVEVARLKKDHSLTPGLAVVLVGNDPASEVYVRNKGIATTEAGMNSFEFKLPAETSEADVLAKVRELNADPAVHGFLVQFPVPNHISQQAVIDAIDPVKDADGLHPLNAGRLASGLPAMVPATPEGCVIMAKRAGGDLSGKHAVIIGRSNLVGKPVAQLLLKENCTVTIAHSRSRDLPSIARQADILVAAVGRPGMVRGDWVKPGAVVIDVGINRVPAPEKGEGKTRLVGDVLFDEAAEVAGAITPVPGGVGLMTVACLLRNTVIAACRQNGIALPQDF.

Residues 166-168, serine 191, and isoleucine 232 contribute to the NADP(+) site; that span reads GRS.

Belongs to the tetrahydrofolate dehydrogenase/cyclohydrolase family. In terms of assembly, homodimer.

The enzyme catalyses (6R)-5,10-methylene-5,6,7,8-tetrahydrofolate + NADP(+) = (6R)-5,10-methenyltetrahydrofolate + NADPH. The catalysed reaction is (6R)-5,10-methenyltetrahydrofolate + H2O = (6R)-10-formyltetrahydrofolate + H(+). It functions in the pathway one-carbon metabolism; tetrahydrofolate interconversion. Functionally, catalyzes the oxidation of 5,10-methylenetetrahydrofolate to 5,10-methenyltetrahydrofolate and then the hydrolysis of 5,10-methenyltetrahydrofolate to 10-formyltetrahydrofolate. This Parvibaculum lavamentivorans (strain DS-1 / DSM 13023 / NCIMB 13966) protein is Bifunctional protein FolD.